The sequence spans 676 residues: Probable LRR receptor-like serine/threonine-protein kinase At4g31250 (676 aa).

The signal sequence occupies residues 1–26 (MTRDDKFPIVYSLLLIVLLFVSPIYG). Residues 27-242 (DGDADALLKF…LLPCRYTRPP (216 aa)) lie on the Extracellular side of the membrane. N-linked (GlcNAc...) asparagine glycosylation is found at Asn42, Asn73, and Asn83. LRR repeat units lie at residues 98 to 122 (IRGL…IDGL), 123 to 146 (VSLA…LFSG), 148 to 171 (KALL…LGKL), 172 to 195 (PKLT…KQKN), and 197 to 218 (VTVN…GLMN). N-linked (GlcNAc...) asparagine glycosylation is present at Asn218. Residues 243-263 (FFTVFLLALTILAVVVLITVF) traverse the membrane as a helical segment. The Cytoplasmic portion of the chain corresponds to 264–676 (LSVCILSRRQ…RAMTEEFSLM (413 aa)). Positions 319–330 (TVQRDSTATSGA) are enriched in polar residues. The segment at 319-347 (TVQRDSTATSGAISVGGLSPDEDKRGDQR) is disordered. Positions 366–640 (RASAEVLGSG…HEAVDRIEEV (275 aa)) constitute a Protein kinase domain. Position 368 is a phosphoserine (Ser368). ATP contacts are provided by residues 372–380 (LGSGGFGSS) and Lys394. Phosphoserine is present on residues Ser446 and Ser543. The segment at 641-676 (DRDAGGGQESVRSSYVTASDGDHRSSRAMTEEFSLM) is disordered.

Belongs to the protein kinase superfamily. Ser/Thr protein kinase family.

It localises to the membrane. It carries out the reaction L-seryl-[protein] + ATP = O-phospho-L-seryl-[protein] + ADP + H(+). The enzyme catalyses L-threonyl-[protein] + ATP = O-phospho-L-threonyl-[protein] + ADP + H(+). This chain is Probable LRR receptor-like serine/threonine-protein kinase At4g31250, found in Arabidopsis thaliana (Mouse-ear cress).